Reading from the N-terminus, the 840-residue chain is MALKKPKKSRLTTEEIKQQLEGSTIKEQSITKEVETSFLDYSMSVIVARALPDVRDGFKPVHRRALFAAFENGMTHDKPYKKSARWVGDVIGKYHPHGDQAVYQTIVRMAQDFSMRYLLVDGHGNFGSIDGDSAAAMRYTEARLSKISYELLKYIDKETVDFVPNYDASEQEPSVLPSGFPNLLTNGTTGIAVGMATNIPPHNLTEVCQAIKAYAKNHNVTISEIMEYLKGPDFPTGAEIYGDSGIIKYFNTGRGSVTIRSKYEIEDIGQGRVAIVVTEIPYMVNKANLIEKIVELVTNKQIEGISDLRDESSRDGIRIVIEVKRDVIPEVLLNKLFKTTPLQTNFSVNNLALVNGVPMVLNIKEMIKYYFEHQIEILVRRTNFDLKKAKERIHIVEGLVIAVNNIDEVIKIIKASGDDDIASKSLIQRFDLTELQTKAILEMRLRALTGLNIDKLKKEYEDLILVIKDLEDVLNNYNRQVNIICENLDYLIEKFGDERRTEIMYGVSSHIDDEDLIPVEDIVVTMSKRGYFKRLPIDTYKNQRRGGVGVQGLKTYEDDDVEKILVANTHTDLLFFSDLGRVYRLRGHEVPLGSRQSKGIPAINFLPIEKSESILTILPIDNYDQGSLFFTTSKGIIKRANLSDFESIRANGKIAITLKDGDKLFSVMQTLGNDEVFIGASNGNVIRFNENDAREMGRIATGVKGINLENDEYVVGTGLSSHGEYVLAVGSKGLGKLTDINDYRLTKRGAKGVNTLKVNDKTGNLVSIKVVNREEEALIITTSGKVIRLSIKDISVIGRNTSGVKLISLENKEEVKSIAIFKKEEINDEQLLQENDYNLK.

The region spanning L51–L516 is the Topo IIA-type catalytic domain. Catalysis depends on Y139, which acts as the O-(5'-phospho-DNA)-tyrosine intermediate. The GyrA-box signature appears at Q543–G549.

The protein belongs to the type II topoisomerase GyrA/ParC subunit family. As to quaternary structure, heterotetramer, composed of two GyrA and two GyrB chains. In the heterotetramer, GyrA contains the active site tyrosine that forms a transient covalent intermediate with DNA, while GyrB binds cofactors and catalyzes ATP hydrolysis.

The protein localises to the cytoplasm. The catalysed reaction is ATP-dependent breakage, passage and rejoining of double-stranded DNA.. A type II topoisomerase that negatively supercoils closed circular double-stranded (ds) DNA in an ATP-dependent manner to modulate DNA topology and maintain chromosomes in an underwound state. Negative supercoiling favors strand separation, and DNA replication, transcription, recombination and repair, all of which involve strand separation. Also able to catalyze the interconversion of other topological isomers of dsDNA rings, including catenanes and knotted rings. Type II topoisomerases break and join 2 DNA strands simultaneously in an ATP-dependent manner. The polypeptide is DNA gyrase subunit A (Ureaplasma parvum serovar 3 (strain ATCC 700970)).